The primary structure comprises 154 residues: ATP synthase subunit b (154 aa).

Residues 5 to 27 (LLGQAIAFTLFVWFCMKYVWPPI) traverse the membrane as a helical segment.

The protein belongs to the ATPase B chain family. F-type ATPases have 2 components, F(1) - the catalytic core - and F(0) - the membrane proton channel. F(1) has five subunits: alpha(3), beta(3), gamma(1), delta(1), epsilon(1). F(0) has three main subunits: a(1), b(2) and c(10-14). The alpha and beta chains form an alternating ring which encloses part of the gamma chain. F(1) is attached to F(0) by a central stalk formed by the gamma and epsilon chains, while a peripheral stalk is formed by the delta and b chains.

It is found in the cell inner membrane. Its function is as follows. F(1)F(0) ATP synthase produces ATP from ADP in the presence of a proton or sodium gradient. F-type ATPases consist of two structural domains, F(1) containing the extramembraneous catalytic core and F(0) containing the membrane proton channel, linked together by a central stalk and a peripheral stalk. During catalysis, ATP synthesis in the catalytic domain of F(1) is coupled via a rotary mechanism of the central stalk subunits to proton translocation. Functionally, component of the F(0) channel, it forms part of the peripheral stalk, linking F(1) to F(0). The chain is ATP synthase subunit b from Aliivibrio fischeri (strain ATCC 700601 / ES114) (Vibrio fischeri).